The following is a 496-amino-acid chain: Zinc finger protein PLAGL2 (496 aa).

C2H2-type zinc fingers lie at residues 68–92, 98–120, 127–149, 156–178, 191–213, and 219–242; these read YSCPQLHCGKAFASKYKLYRHMATH, HQCMYCDKMFHRKDHLRNHLQTH, LHCSECGKNYNTKLGYRRHLAMH, LSCKVCLQTFESTQALLEHLKAH, HPCDHCDRRFYTRKDVRRHLVVH, and FLCQYCAQRFGRKDHLTRHVKKSH.

It belongs to the krueppel C2H2-type zinc-finger protein family.

It localises to the nucleus. Its function is as follows. Shows weak transcriptional activatory activity. The polypeptide is Zinc finger protein PLAGL2 (PLAGL2) (Homo sapiens (Human)).